Here is a 278-residue protein sequence, read N- to C-terminus: Secreted RxLR effector protein 151 (278 aa).

The signal sequence occupies residues 1 to 18; sequence MRNRAVLFGLFFIGYSSC. The RxLR-dEER signature appears at 49–64; it reads RLLQVDGPKRILAEER.

Belongs to the RxLR effector family.

The protein localises to the secreted. It localises to the host endoplasmic reticulum membrane. In terms of biological role, secreted effector that completely suppresses the host cell death induced by cell death-inducing proteins. This is Secreted RxLR effector protein 151 from Plasmopara viticola (Downy mildew of grapevine).